The chain runs to 85 residues: uncharacterized protein (85 aa).

The next 2 helical transmembrane spans lie at 12–34 (ICLS…VLAF) and 49–71 (IPEF…NGFV).

Its subcellular location is the cell membrane. This is an uncharacterized protein from Archaeoglobus fulgidus (strain ATCC 49558 / DSM 4304 / JCM 9628 / NBRC 100126 / VC-16).